We begin with the raw amino-acid sequence, 241 residues long: ATP phosphoribosyltransferase (241 aa).

This sequence belongs to the ATP phosphoribosyltransferase family. Short subfamily. As to quaternary structure, heteromultimer composed of HisG and HisZ subunits.

Its subcellular location is the cytoplasm. The catalysed reaction is 1-(5-phospho-beta-D-ribosyl)-ATP + diphosphate = 5-phospho-alpha-D-ribose 1-diphosphate + ATP. The protein operates within amino-acid biosynthesis; L-histidine biosynthesis; L-histidine from 5-phospho-alpha-D-ribose 1-diphosphate: step 1/9. Its function is as follows. Catalyzes the condensation of ATP and 5-phosphoribose 1-diphosphate to form N'-(5'-phosphoribosyl)-ATP (PR-ATP). Has a crucial role in the pathway because the rate of histidine biosynthesis seems to be controlled primarily by regulation of HisG enzymatic activity. This chain is ATP phosphoribosyltransferase, found in Gluconobacter oxydans (strain 621H) (Gluconobacter suboxydans).